The sequence spans 499 residues: Ribose import ATP-binding protein RbsA 1 (499 aa).

2 ABC transporter domains span residues 5-240 (LEMR…GRSI) and 249-494 (TEPG…TAGS). 37–44 (GENGAGKS) lines the ATP pocket.

It belongs to the ABC transporter superfamily. Ribose importer (TC 3.A.1.2.1) family. In terms of assembly, the complex is composed of an ATP-binding protein (RbsA), two transmembrane proteins (RbsC) and a solute-binding protein (RbsB).

It localises to the cell membrane. The catalysed reaction is D-ribose(out) + ATP + H2O = D-ribose(in) + ADP + phosphate + H(+). Functionally, part of the ABC transporter complex RbsABC involved in ribose import. Responsible for energy coupling to the transport system. This is Ribose import ATP-binding protein RbsA 1 from Rubrobacter xylanophilus (strain DSM 9941 / JCM 11954 / NBRC 16129 / PRD-1).